The following is a 394-amino-acid chain: MPAYKYNRVFLIVMDSVGIGEAPDAADFNDEGAHTLGHIAEHMNGLHMPNMAKLGLGLIEDIKGVEKTEHPLAYYGKMQEASNGKDTMTGHWEIMGLYIDKPFKVFPEGFPDELLQELEKRSGRKIIGNKPASGTAILDELGQEHMETGALIVYTSADSVLQIAAHEEVVPLEELYRICETARELTLDPKYMVGRIIARPFVGEPGQFKRTPNRHDYALKPFDRTVMNELKDCGLDVISIGKISDIYDGEGITSSRRTVSNMDGMDKVIDTLGEDFTGLSFANLVDFDALFGHRRDPEGYGRALEEFDARLPEVFEKMREDDLLIITADHGNDPIHHGTDHTREYVPILAYSKKHKKAQMLPLADTFADIGATIADNFQTNKPKYGKSFLSLLQ.

Aspartate 15, aspartate 288, histidine 293, aspartate 329, histidine 330, and histidine 341 together coordinate Mn(2+).

The protein belongs to the phosphopentomutase family. It depends on Mn(2+) as a cofactor.

The protein resides in the cytoplasm. It carries out the reaction 2-deoxy-alpha-D-ribose 1-phosphate = 2-deoxy-D-ribose 5-phosphate. The enzyme catalyses alpha-D-ribose 1-phosphate = D-ribose 5-phosphate. It functions in the pathway carbohydrate degradation; 2-deoxy-D-ribose 1-phosphate degradation; D-glyceraldehyde 3-phosphate and acetaldehyde from 2-deoxy-alpha-D-ribose 1-phosphate: step 1/2. Isomerase that catalyzes the conversion of deoxy-ribose 1-phosphate (dRib-1-P) and ribose 1-phosphate (Rib-1-P) to deoxy-ribose 5-phosphate (dRib-5-P) and ribose 5-phosphate (Rib-5-P), respectively. The polypeptide is Phosphopentomutase (drm) (Bacillus subtilis (strain 168)).